The primary structure comprises 131 residues: Profilin-2 (131 aa).

Cysteines 13 and 115 form a disulfide. The Involved in PIP2 interaction motif lies at 81–97 (AVIRGKKGAGGITIKKT). T111 carries the phosphothreonine modification.

The protein belongs to the profilin family. In terms of assembly, occurs in many kinds of cells as a complex with monomeric actin in a 1:1 ratio. Phosphorylated by MAP kinases.

The protein localises to the cytoplasm. It is found in the cytoskeleton. Its function is as follows. Binds to actin and affects the structure of the cytoskeleton. At high concentrations, profilin prevents the polymerization of actin, whereas it enhances it at low concentrations. By binding to PIP2, it inhibits the formation of IP3 and DG. The polypeptide is Profilin-2 (PRO2) (Phleum pratense (Common timothy)).